Consider the following 131-residue polypeptide: Probable flagellum biosynthesis repressor protein FlbT (131 aa).

Belongs to the FlbT family.

Its function is as follows. Has a post-transcriptional repressor function in flagellum biogenesis. Associates with the 5'-UTR of fljK mRNA and promotes its degradation. This Caulobacter sp. (strain K31) protein is Probable flagellum biosynthesis repressor protein FlbT.